The chain runs to 1220 residues: MEEGILLKKYVESSDKDIRYMALSDLAARLNDANHLKNLKLESFPDTLDVLLQALSDASPEVQQEAVRCVAIISSKIPQDKLKSTVENLLSGVAGKKSKNYLSALSLLLSNSNVQPFVNKFYTSTVFPSFLQILKQYNVAQEEFFAILCVVCDSLEIYHSNLSTLLPNNFELCIDVFQKCTTQCQRELIIKKACYLLSDVSLYGPRFAYKYIIEVLDRGLGPSTQMSEVNISIKLLNEILLSSKKEKDSSTSFISTAVADYTNKILSLLKKEEAPDELTQKLLEVLGLLLEYQQVNILKIWPELHGLLISKISYDPNLISDTNDEDDIADFLEEMSDYSSIYEDEEDVSWIVRRESLKVVLSVILSRLEYLPIVLQALGTSVVSKLNDREESVCLISIEVLKQAFLHVPRWIEVYATSNDRKRRYEGLPSDRSAISDTSIYLVSVIGKHVSKLSDKTPLSIVSELLNLVTVIFSSRDLGVQSEFSNLSSIIYRFPDFSTLDIKIKLNLVRLISAIISCGCEEIENMESKMSTILSLAVQNNYPQLSYEALITELSFCKYIHKKQPTNVSTDFSTMIDSSLQLLESKISDLKVRLALIDLVSQYVILFYEPDFDSIFLRRVLIILCKKLQEEPTRSAAARALCDIFMSVTDITKIENGTKIYEEILQDCCRHIDKSGNEFTTAYLELLEVLLKVGQKYLAESLLEHILGLLIETLKRNTENTVAILKCLLIIPLSILLKSKNLLIDTIISHLQSSTIHLNEESVCLLSRIIAVISKEEDLELIINSFTCAQKPVEEMVTLALIAAQLICIFQSKAIVTSLNKSFMSPKSEVRIKVFTTLIFGQLDYGKLTLPANEYFDTIASNLNSPNADVMKAAAIALGSLTSQSEKFIKELCALYVSDAYDKELLLISFLTFLKKSKIDYETADKIWDILSKDIENIKDFSTSPFRTLLSECLGLLICNESSSLYYKLELLSSSEASNHMLLSLSVFRFSLTLDCPKLKAYEKQFFEKAYKLFQNPDLEVSQETLQVIISVIKNRRSCIADVYNELLQGLISKSSVDSSNVHVVQMGPFQHVVDNSINQRQLVFETLYSLLDIPESLNHLTHFLQVSVMGLEDEHYIKLVSLSILEKLVDCSPSIIDEQVDTILEALRKIIELRKTEKTLKTDSDNILDLVRSALRVLFTMKLKCDNPVISEFESQVQKGPYSLEYEGIKNEIKTTIKT.

12 HEAT repeats span residues 1-35 (MEEG…DANH), 42-79 (ESFP…KIPQ), 121-157 (FYTS…SLEI), 259-295 (ADYT…YQQV), 365-410 (LSRL…HVPR), 615-650 (IFLR…SVTD), 680-700 (TTAY…YLAE), 701-737 (SLLE…SILL), 738-775 (KSKN…VISK), 810-847 (FQSK…DYGK), 850-887 (LPAN…QSEK), and 1020-1057 (EVSQ…KSSV).

Belongs to the CAND family.

It is found in the nucleus. In terms of biological role, key assembly factor of SCF (SKP1-CUL1-F-box protein) E3 ubiquitin ligase complexes that promotes the exchange of the substrate-recognition F-box subunit in SCF complexes, thereby playing a key role in the cellular repertoire of SCF complexes. Acts as a F-box protein exchange factor. In Schizosaccharomyces pombe (strain 972 / ATCC 24843) (Fission yeast), this protein is Cullin-associated NEDD8-dissociated protein 1 (knd1).